The sequence spans 588 residues: Adenine deaminase (588 aa).

Belongs to the metallo-dependent hydrolases superfamily. Adenine deaminase family. Homodimer. The cofactor is Mn(2+).

The catalysed reaction is adenine + H2O + H(+) = hypoxanthine + NH4(+). This chain is Adenine deaminase, found in Shigella sonnei (strain Ss046).